The primary structure comprises 452 residues: Protein mab-21-like 4 (452 aa).

This is Protein mab-21-like 4 (Mab21l4) from Mus musculus (Mouse).